Reading from the N-terminus, the 295-residue chain is Bifunctional protein FolD (295 aa).

Residues 166-168 (GRS), Ser191, and Ile232 contribute to the NADP(+) site.

This sequence belongs to the tetrahydrofolate dehydrogenase/cyclohydrolase family. As to quaternary structure, homodimer.

It catalyses the reaction (6R)-5,10-methylene-5,6,7,8-tetrahydrofolate + NADP(+) = (6R)-5,10-methenyltetrahydrofolate + NADPH. The enzyme catalyses (6R)-5,10-methenyltetrahydrofolate + H2O = (6R)-10-formyltetrahydrofolate + H(+). The protein operates within one-carbon metabolism; tetrahydrofolate interconversion. Catalyzes the oxidation of 5,10-methylenetetrahydrofolate to 5,10-methenyltetrahydrofolate and then the hydrolysis of 5,10-methenyltetrahydrofolate to 10-formyltetrahydrofolate. The sequence is that of Bifunctional protein FolD from Wolbachia pipientis subsp. Culex pipiens (strain wPip).